The chain runs to 218 residues: LHFPL tetraspan subfamily member 3 protein (218 aa).

4 helical membrane passes run 22 to 42 (IGVLWAIFTICFAIVNIVCFI), 96 to 116 (FFIGLSMTLIIGCIVSFGLFF), 126 to 146 (ICAWMQLCSAACLVLGCMIFP), and 177 to 197 (ILAIIGILDALILSFLAFVLG).

It belongs to the LHFP family.

The protein resides in the membrane. The protein is LHFPL tetraspan subfamily member 3 protein of Xenopus laevis (African clawed frog).